Consider the following 435-residue polypeptide: MALVNNPIQAFANVALLFAVQILIPAFLIITTPKYSWLRYFGIPCIAFPAYLIFQLAPTLSNSIFHNSFLACEGILVVAHCVNLLLILQDGGLTWSDLRRSGVAGEKSETPPDATFLRKLISAVRLVVSLRGVDTPWEAKNTPPHPSSLGPGGGSRASFLIRQGAILAWQYLFLDVLLEVTKQEPPENTDKFYRPGMEYEYLNLTAEERFIRAFMPFVSWFVVSRLLLDSTWRALSILFVASGLGSPQSWRPLFGSMWDAYTLRNFWGKFWHQILRWPFTSNVNFLTRRVVKLPVPSLLDRYTNNFLVFLLSGILHAVSANIMGLSAVESGSIPYFSSFALGMMLEDGVQAFYNRLHADKERKTGIWKKVVGFIWVVFWMSLTSPWYMFPSRRKVAGEAAWVLPFNLTEVIGMPMMWGLLGTFGMLVKWAFGTSL.

Transmembrane regions (helical) follow at residues 10 to 30 (AFAN…FLII), 40 to 60 (YFGI…APTL), and 68 to 88 (SFLA…LLIL). Asparagine 203 carries an N-linked (GlcNAc...) asparagine glycan. Transmembrane regions (helical) follow at residues 306-326 (FLVF…MGLS), 333-353 (IPYF…QAFY), and 370-390 (VVGF…YMFP). Asparagine 406 is a glycosylation site (N-linked (GlcNAc...) asparagine). A helical membrane pass occupies residues 407 to 427 (LTEVIGMPMMWGLLGTFGMLV).

Belongs to the wax synthase family.

The protein localises to the membrane. It functions in the pathway secondary metabolite biosynthesis; terpenoid biosynthesis. Its function is as follows. Acetyltransferase; part of the gene cluster that mediates the biosynthesis of the meroterpenoids arthripenoids. The pathway begins with the HR-PKS atnH that catalyzes two chain-extension steps to form a reduced triketide, which then primes the SAT domain in the NR-PKS atnG to initiate three more cycles of extension to give a linear hexaketide corresponding to the polyketide part of arthripenoids. The FAD-dependent monooxygenase atnJ then performs an oxidative decarboxylation at C11 of the atnH/atnG product, via an electrophilic aromatic hydroxylation with concomitant ipso-decarboxylation. The membrane-bound polyprenyl transferase atnF then introduces a farnesyl group before the FAD-dependent monooxygenase atnK functions as the first epoxidase on terminal C12'-C13' olefin, followed by a second epoxidation on C7'-C8' catalyzed by atnA. The terpene cyclase/mutase atnI then initiates the sequential tricyclic ring formation through protonation of the terminal epoxide and catalyzes the regioselective and stereoselective 6/6/6-tricyclic ring formation. The cytochrome P450 monooxygenase atnM is responsible for hydroxylating both C1' and C10'. The next steps may involve ketoreduction and acetyl transfer by the ketoreductase atnB and the acetyltransferase atnC, and lead to the production of arthripenoid B, the final biosynthetic product of the atn cluster. The hydroquinone moiety in arthripenoid B is prone to undergo spontaneous oxidation to afford a benzoquinone compound, a key intermediate for generating structure diversity. For instance, addition of a cysteine followed by ring contraction gives arthripenoid A, tautomerization gives the main product arthripenoid C, addition of a molecular of water or amine affords arthripenoid D or E, respectively, and loss of one water forms arthripenoid F. In Arthrinium sp, this protein is Acetyltransferase atnC.